Reading from the N-terminus, the 245-residue chain is Aliphatic sulfonates import ATP-binding protein SsuB (245 aa).

The region spanning 6 to 225 is the ABC transporter domain; that stretch reads VTVRGLRRAF…SRGDEGFDDL (220 aa). 38-45 is an ATP binding site; it reads GLSGSGKS.

This sequence belongs to the ABC transporter superfamily. Aliphatic sulfonates importer (TC 3.A.1.17.2) family. The complex is composed of two ATP-binding proteins (SsuB), two transmembrane proteins (SsuC) and a solute-binding protein (SsuA).

Its subcellular location is the cell membrane. The enzyme catalyses ATP + H2O + aliphatic sulfonate-[sulfonate-binding protein]Side 1 = ADP + phosphate + aliphatic sulfonateSide 2 + [sulfonate-binding protein]Side 1.. Its function is as follows. Part of the ABC transporter complex SsuABC involved in aliphatic sulfonates import. Responsible for energy coupling to the transport system. The chain is Aliphatic sulfonates import ATP-binding protein SsuB from Mycobacterium sp. (strain MCS).